The chain runs to 86 residues: Cell division topological specificity factor (86 aa).

This sequence belongs to the MinE family.

In terms of biological role, prevents the cell division inhibition by proteins MinC and MinD at internal division sites while permitting inhibition at polar sites. This ensures cell division at the proper site by restricting the formation of a division septum at the midpoint of the long axis of the cell. This chain is Cell division topological specificity factor, found in Allorhizobium ampelinum (strain ATCC BAA-846 / DSM 112012 / S4) (Agrobacterium vitis (strain S4)).